The chain runs to 487 residues: MKYNDLRDFLAQLELRGELKRVDIEVSPHLEMTEICDRLLKQAGPAVLFERPAGHTIPVLGNLFGTPERVALGMGQTSVSALREVGKLLAYLKEPEPPKGLRDAWDKLPILKQVLNMPPRELASAPCQEIVWEGADVDLSKLPIQTCWPGDVASLITWGLTVTRGPHKSRQNLGIYRQQVIAPNKVIMRWLAHRGGALDYRDFCQINPGEPYPVAVALGADPATILGAVTPVPDSLSEYQFAGLLRGAKTEIVKCLTHDLQVPASAEIVLEGYIYPNETALEGPYGDHTGYYNEQETFPVFTIERITMRRDPIYHSTYTGKPPDEPAILGVALNEVFVPLLQKQFTEITDFYLPPEGCSYRLAVVSMKKQYPGHAKRVMFGIWSFLRQFMYTKFIIVTDDDINIRDWKEVIWAITTRVDPVRDTLIVENTPIDYLDFASPVSGLGSKMGLDATNKWPGETSREWGRVIEMDAAVKARVDHLWQQLLF.

N172 contributes to the Mn(2+) binding site. Prenylated FMN-binding positions include 175-177 (IYR), 189-191 (RWL), and 194-195 (RG). E238 is a Mn(2+) binding site. The active-site Proton donor is the D287.

The protein belongs to the UbiD family. Homohexamer. Prenylated FMN serves as cofactor. The cofactor is Mn(2+).

Its subcellular location is the cell membrane. It carries out the reaction a 4-hydroxy-3-(all-trans-polyprenyl)benzoate + H(+) = a 2-(all-trans-polyprenyl)phenol + CO2. The protein operates within cofactor biosynthesis; ubiquinone biosynthesis. Its function is as follows. Catalyzes the decarboxylation of 3-octaprenyl-4-hydroxy benzoate to 2-octaprenylphenol, an intermediate step in ubiquinone biosynthesis. The protein is 3-octaprenyl-4-hydroxybenzoate carboxy-lyase of Nitrosomonas eutropha (strain DSM 101675 / C91 / Nm57).